Here is a 222-residue protein sequence, read N- to C-terminus: 25 kDa elongation factor 1-beta (222 aa).

A compositionally biased stretch (low complexity) spans 75–94 (TSASAPAKQAPKKAASAPAK). The segment at 75–98 (TSASAPAKQAPKKAASAPAKQADE) is disordered.

Belongs to the EF-1-beta/EF-1-delta family. EF-1 is composed of 4 subunits: alpha, beta, delta, and gamma.

EF-1-beta and EF-1-delta stimulate the exchange of GDP bound to EF-1-alpha to GTP. This chain is 25 kDa elongation factor 1-beta, found in Trypanosoma cruzi.